The sequence spans 279 residues: Putative F-box protein At1g50880 (279 aa).

Residues 19-69 (SSSMSSIPLDVTSKILAKLPAKSVLRARCVSKQWSSISTDPYFISNMFPKQ) form the F-box domain.

This chain is Putative F-box protein At1g50880, found in Arabidopsis thaliana (Mouse-ear cress).